Consider the following 204-residue polypeptide: Holliday junction branch migration complex subunit RuvA (204 aa).

The segment at 1–63 (MIASLRGTVI…EDAMKLYGFI (63 aa)) is domain I. The interval 64-142 (DDQSREMFAL…AYTVGVVDDG (79 aa)) is domain II. The segment at 143–151 (APTAPTQGV) is flexible linker. Residues 152-204 (APVVVVDQVTQALTGLGFTEKQADDAVAAVLSADPGLDTSAALRAALAKLGGK) form a domain III region.

The protein belongs to the RuvA family. As to quaternary structure, homotetramer. Forms an RuvA(8)-RuvB(12)-Holliday junction (HJ) complex. HJ DNA is sandwiched between 2 RuvA tetramers; dsDNA enters through RuvA and exits via RuvB. An RuvB hexamer assembles on each DNA strand where it exits the tetramer. Each RuvB hexamer is contacted by two RuvA subunits (via domain III) on 2 adjacent RuvB subunits; this complex drives branch migration. In the full resolvosome a probable DNA-RuvA(4)-RuvB(12)-RuvC(2) complex forms which resolves the HJ.

The protein localises to the cytoplasm. Its function is as follows. The RuvA-RuvB-RuvC complex processes Holliday junction (HJ) DNA during genetic recombination and DNA repair, while the RuvA-RuvB complex plays an important role in the rescue of blocked DNA replication forks via replication fork reversal (RFR). RuvA specifically binds to HJ cruciform DNA, conferring on it an open structure. The RuvB hexamer acts as an ATP-dependent pump, pulling dsDNA into and through the RuvAB complex. HJ branch migration allows RuvC to scan DNA until it finds its consensus sequence, where it cleaves and resolves the cruciform DNA. The polypeptide is Holliday junction branch migration complex subunit RuvA (Corynebacterium efficiens (strain DSM 44549 / YS-314 / AJ 12310 / JCM 11189 / NBRC 100395)).